Reading from the N-terminus, the 331-residue chain is Lipoyl synthase (331 aa).

Positions 1–20 (MTTETNPAVTPAYNPSEKQK) are disordered. Residues Cys71, Cys76, Cys82, Cys97, Cys101, Cys104, and Ser311 each contribute to the [4Fe-4S] cluster site. In terms of domain architecture, Radical SAM core spans 82-300 (CFGKGTATFM…EEEAYKMGFA (219 aa)).

Belongs to the radical SAM superfamily. Lipoyl synthase family. Requires [4Fe-4S] cluster as cofactor.

The protein resides in the cytoplasm. It catalyses the reaction [[Fe-S] cluster scaffold protein carrying a second [4Fe-4S](2+) cluster] + N(6)-octanoyl-L-lysyl-[protein] + 2 oxidized [2Fe-2S]-[ferredoxin] + 2 S-adenosyl-L-methionine + 4 H(+) = [[Fe-S] cluster scaffold protein] + N(6)-[(R)-dihydrolipoyl]-L-lysyl-[protein] + 4 Fe(3+) + 2 hydrogen sulfide + 2 5'-deoxyadenosine + 2 L-methionine + 2 reduced [2Fe-2S]-[ferredoxin]. It functions in the pathway protein modification; protein lipoylation via endogenous pathway; protein N(6)-(lipoyl)lysine from octanoyl-[acyl-carrier-protein]: step 2/2. Functionally, catalyzes the radical-mediated insertion of two sulfur atoms into the C-6 and C-8 positions of the octanoyl moiety bound to the lipoyl domains of lipoate-dependent enzymes, thereby converting the octanoylated domains into lipoylated derivatives. The chain is Lipoyl synthase from Janthinobacterium sp. (strain Marseille) (Minibacterium massiliensis).